A 209-amino-acid chain; its full sequence is Large ribosomal subunit protein bL25 (209 aa).

The disordered stretch occupies residues 185 to 209; the sequence is SKATTGEEEGAEAAGEGEEAEEKPE. Positions 190-209 are enriched in acidic residues; sequence GEEEGAEAAGEGEEAEEKPE.

Belongs to the bacterial ribosomal protein bL25 family. CTC subfamily. In terms of assembly, part of the 50S ribosomal subunit; part of the 5S rRNA/L5/L18/L25 subcomplex. Contacts the 5S rRNA. Binds to the 5S rRNA independently of L5 and L18.

Functionally, this is one of the proteins that binds to the 5S RNA in the ribosome where it forms part of the central protuberance. The chain is Large ribosomal subunit protein bL25 from Syntrophomonas wolfei subsp. wolfei (strain DSM 2245B / Goettingen).